A 589-amino-acid polypeptide reads, in one-letter code: Arginine--tRNA ligase (589 aa).

The 'HIGH' region signature appears at 131-141 (ANPTGPLHVGH).

It belongs to the class-I aminoacyl-tRNA synthetase family. In terms of assembly, monomer.

It is found in the cytoplasm. The catalysed reaction is tRNA(Arg) + L-arginine + ATP = L-arginyl-tRNA(Arg) + AMP + diphosphate. The protein is Arginine--tRNA ligase of Legionella pneumophila (strain Paris).